The primary structure comprises 184 residues: Ribosome maturation factor RimM (184 aa).

Positions 101-180 (EGEFFYCDLV…KITTHNAKTL (80 aa)) constitute a PRC barrel domain.

It belongs to the RimM family. As to quaternary structure, binds ribosomal protein uS19.

The protein localises to the cytoplasm. Its function is as follows. An accessory protein needed during the final step in the assembly of 30S ribosomal subunit, possibly for assembly of the head region. Essential for efficient processing of 16S rRNA. May be needed both before and after RbfA during the maturation of 16S rRNA. It has affinity for free ribosomal 30S subunits but not for 70S ribosomes. In Helicobacter pylori (strain ATCC 700392 / 26695) (Campylobacter pylori), this protein is Ribosome maturation factor RimM.